We begin with the raw amino-acid sequence, 860 residues long: Ras GTPase-activating-like protein gapA (860 aa).

A compositionally biased stretch (acidic residues) spans 1–20 (MEGLEIEDEDVILLDEDDDS). Residues 1–48 (MEGLEIEDEDVILLDEDDDSSSSSTVNNSSSNIKNNGNTNNNIGNDDS) form a disordered region. The segment covering 21–46 (SSSSTVNNSSSNIKNNGNTNNNIGND) has biased composition (low complexity). Residues 146–185 (AEIQELKRNMVAEIRRNHLLERDVNKLDKRIALLIKHRSN) are a coiled coil. The Ras-GAP domain maps to 269 to 515 (FLILSLFRLA…SIVRQYLEDL (247 aa)). Residues 663-732 (NNPQLSSNAE…TIALRDLRKH (70 aa)) adopt a coiled-coil conformation.

In terms of assembly, heterotetramer. Quaternary complex with activated rac1A, ctxA and ctxB in the absence of rgaA.

Functionally, part of signaling pathway that is required for completion of cytokinesis. gapA and rgaA control cortexillin localization to the cleavage furrow and hence may be involved in cleavage of the midbody in the final stage of cytokinesis by regulating the actin cytoskeleton. Forms a complex by linking activated rac1A to ctxA in the absence of rgaA. Assembly of this complex is necessary for the recruitment of cortexillin to the midzone of the dividing cell. This Dictyostelium discoideum (Social amoeba) protein is Ras GTPase-activating-like protein gapA (gapA).